A 269-amino-acid polypeptide reads, in one-letter code: Ribosomal RNA small subunit methyltransferase J (269 aa).

Residues 125 to 126 and aspartate 179 contribute to the S-adenosyl-L-methionine site; that span reads ER.

Belongs to the methyltransferase superfamily. RsmJ family.

The protein localises to the cytoplasm. The catalysed reaction is guanosine(1516) in 16S rRNA + S-adenosyl-L-methionine = N(2)-methylguanosine(1516) in 16S rRNA + S-adenosyl-L-homocysteine + H(+). Specifically methylates the guanosine in position 1516 of 16S rRNA. The polypeptide is Ribosomal RNA small subunit methyltransferase J (Pseudomonas syringae pv. tomato (strain ATCC BAA-871 / DC3000)).